The sequence spans 37 residues: MKVRASVKKICRNCKVIKRNGVVRVICVEPKHKQRQG.

Belongs to the bacterial ribosomal protein bL36 family.

This chain is Large ribosomal subunit protein bL36, found in Aliivibrio fischeri (strain ATCC 700601 / ES114) (Vibrio fischeri).